Reading from the N-terminus, the 505-residue chain is MAQIDFRKKINWHRRYRSPQGVKTEHEILRIFESDRGRIINSPAIRRLQQKTQVFPLERNAAVRTRLTHSMEVQQVGRYIAKEILSRLKELKLLEAYGLDELTGPFESIVEMSCLMHDIGNPPFGHFGEAAINDWFRQRLHPEDAESQPLTDDRCSVAALRLRDGEEPLNELRRKIRQDLCHFEGNAQGIRLVHTLMRMNLTWAQVGGILKYTRPAWWRGETPETHHYLMKKPGYYLSEEAYIARLRKELNLALYSRFPLTWIMEAADDISYCVADLEDAVEKRIFTVEQLYHHLHEAWGQHEKGSLFSLVVENAWEKSRSNSLSRSTEDQFFMYLRVNTLNKLVPYAAQRFIDNLPAIFAGTFNHALLEDASECSDLLKLYKNVAVKHVFSHPDVEQLELQGYRVISGLLEIYRPLLSLSLSDFTELVEKERVKRFPIESRLFHKLSTRHRLAYVEAVSKLPSDSPEFPLWEYYYRCRLLQDYISGMTDLYAWDEYRRLMAVEQ.

One can recognise an HD domain in the interval 66–273 (RLTHSMEVQQ…MEAADDISYC (208 aa)).

Belongs to the dGTPase family. Type 1 subfamily. Homotetramer. It depends on Mg(2+) as a cofactor.

The enzyme catalyses dGTP + H2O = 2'-deoxyguanosine + triphosphate + H(+). In terms of biological role, dGTPase preferentially hydrolyzes dGTP over the other canonical NTPs. This Escherichia coli O7:K1 (strain IAI39 / ExPEC) protein is Deoxyguanosinetriphosphate triphosphohydrolase.